The sequence spans 455 residues: Bifunctional protein GlmU (455 aa).

A pyrophosphorylase region spans residues 1-227 (MDSLSIVILA…SWEAAGVNNK (227 aa)). UDP-N-acetyl-alpha-D-glucosamine is bound by residues 9–12 (LAAG), lysine 23, glutamine 74, 79–80 (GT), 101–103 (YGD), glycine 137, glutamate 152, asparagine 167, and asparagine 225. A Mg(2+)-binding site is contributed by aspartate 103. Asparagine 225 serves as a coordination point for Mg(2+). The interval 228-248 (VQLAELERILQANQARALLEA) is linker. The N-acetyltransferase stretch occupies residues 249-455 (GVTLADPARI…GWKRPQKKSG (207 aa)). UDP-N-acetyl-alpha-D-glucosamine-binding residues include arginine 331 and lysine 349. Histidine 361 (proton acceptor) is an active-site residue. UDP-N-acetyl-alpha-D-glucosamine is bound by residues tyrosine 364 and asparagine 375. Acetyl-CoA-binding positions include alanine 378, 384 to 385 (NY), serine 403, alanine 421, and arginine 438.

This sequence in the N-terminal section; belongs to the N-acetylglucosamine-1-phosphate uridyltransferase family. The protein in the C-terminal section; belongs to the transferase hexapeptide repeat family. As to quaternary structure, homotrimer. The cofactor is Mg(2+).

The protein localises to the cytoplasm. It carries out the reaction alpha-D-glucosamine 1-phosphate + acetyl-CoA = N-acetyl-alpha-D-glucosamine 1-phosphate + CoA + H(+). The catalysed reaction is N-acetyl-alpha-D-glucosamine 1-phosphate + UTP + H(+) = UDP-N-acetyl-alpha-D-glucosamine + diphosphate. It participates in nucleotide-sugar biosynthesis; UDP-N-acetyl-alpha-D-glucosamine biosynthesis; N-acetyl-alpha-D-glucosamine 1-phosphate from alpha-D-glucosamine 6-phosphate (route II): step 2/2. Its pathway is nucleotide-sugar biosynthesis; UDP-N-acetyl-alpha-D-glucosamine biosynthesis; UDP-N-acetyl-alpha-D-glucosamine from N-acetyl-alpha-D-glucosamine 1-phosphate: step 1/1. The protein operates within bacterial outer membrane biogenesis; LPS lipid A biosynthesis. Its function is as follows. Catalyzes the last two sequential reactions in the de novo biosynthetic pathway for UDP-N-acetylglucosamine (UDP-GlcNAc). The C-terminal domain catalyzes the transfer of acetyl group from acetyl coenzyme A to glucosamine-1-phosphate (GlcN-1-P) to produce N-acetylglucosamine-1-phosphate (GlcNAc-1-P), which is converted into UDP-GlcNAc by the transfer of uridine 5-monophosphate (from uridine 5-triphosphate), a reaction catalyzed by the N-terminal domain. The polypeptide is Bifunctional protein GlmU (Chromobacterium violaceum (strain ATCC 12472 / DSM 30191 / JCM 1249 / CCUG 213 / NBRC 12614 / NCIMB 9131 / NCTC 9757 / MK)).